Here is a 354-residue protein sequence, read N- to C-terminus: Large ribosomal subunit protein uL10 (354 aa).

2 stretches are compositionally biased toward acidic residues: residues 286 to 296 and 307 to 345; these read DEEALPEELQD and AEAD…DGDG. Residues 286 to 354 are disordered; it reads DEEALPEELQ…GGDALGDMFG (69 aa).

This sequence belongs to the universal ribosomal protein uL10 family. Part of the 50S ribosomal subunit. Forms part of the ribosomal stalk which helps the ribosome interact with GTP-bound translation factors. Forms a heptameric L10(L12)2(L12)2(L12)2 complex, where L10 forms an elongated spine to which the L12 dimers bind in a sequential fashion.

Its function is as follows. Forms part of the ribosomal stalk, playing a central role in the interaction of the ribosome with GTP-bound translation factors. This chain is Large ribosomal subunit protein uL10, found in Natronomonas pharaonis (strain ATCC 35678 / DSM 2160 / CIP 103997 / JCM 8858 / NBRC 14720 / NCIMB 2260 / Gabara) (Halobacterium pharaonis).